Consider the following 295-residue polypeptide: 4-hydroxy-tetrahydrodipicolinate synthase (295 aa).

Pyruvate is bound at residue T47. Residue Y135 is the Proton donor/acceptor of the active site. Catalysis depends on K163, which acts as the Schiff-base intermediate with substrate. Position 204 (I204) interacts with pyruvate.

Belongs to the DapA family. Homotetramer; dimer of dimers.

It localises to the cytoplasm. It carries out the reaction L-aspartate 4-semialdehyde + pyruvate = (2S,4S)-4-hydroxy-2,3,4,5-tetrahydrodipicolinate + H2O + H(+). It participates in amino-acid biosynthesis; L-lysine biosynthesis via DAP pathway; (S)-tetrahydrodipicolinate from L-aspartate: step 3/4. Its function is as follows. Catalyzes the condensation of (S)-aspartate-beta-semialdehyde [(S)-ASA] and pyruvate to 4-hydroxy-tetrahydrodipicolinate (HTPA). The polypeptide is 4-hydroxy-tetrahydrodipicolinate synthase (Caldicellulosiruptor bescii (strain ATCC BAA-1888 / DSM 6725 / KCTC 15123 / Z-1320) (Anaerocellum thermophilum)).